The following is a 454-amino-acid chain: DNA repair protein RadA (454 aa).

The segment at 11–28 adopts a C4-type zinc-finger fold; sequence CTECGTHSPKWLGQCSGC. 94-101 is a binding site for ATP; it reads GEPGIGKS. The RadA KNRFG motif signature appears at 251-255; the sequence is KNRFG. The segment at 350-454 is lon-protease-like; that stretch reads DVFLSIAGGL…TIKDAVRLLQ (105 aa).

It belongs to the RecA family. RadA subfamily.

Functionally, DNA-dependent ATPase involved in processing of recombination intermediates, plays a role in repairing DNA breaks. Stimulates the branch migration of RecA-mediated strand transfer reactions, allowing the 3' invading strand to extend heteroduplex DNA faster. Binds ssDNA in the presence of ADP but not other nucleotides, has ATPase activity that is stimulated by ssDNA and various branched DNA structures, but inhibited by SSB. Does not have RecA's homology-searching function. In Chlamydia trachomatis serovar D (strain ATCC VR-885 / DSM 19411 / UW-3/Cx), this protein is DNA repair protein RadA.